Reading from the N-terminus, the 649-residue chain is ATP-dependent zinc metalloprotease FtsH (649 aa).

The Cytoplasmic segment spans residues 1–18 (MQCSYPLARQLERSSALN). A helical membrane pass occupies residues 19-39 (NNLFQKAAIWLVIALVLFTVF). At 40-115 (KQFDKPRAQD…VTGKADDEPN (76 aa)) the chain is on the periplasmic side. Residues 116–136 (VLVQALYYLGPTLLIIVFWFY) form a helical membrane-spanning segment. The Cytoplasmic segment spans residues 137 to 649 (MMRQMQGGGK…PATARADETV (513 aa)). 210 to 217 (GPPGTGKT) contributes to the ATP binding site. Histidine 432 provides a ligand contact to Zn(2+). The active site involves glutamate 433. Zn(2+) is bound by residues histidine 436 and aspartate 508. Positions 606–649 (IMAGRPPRPPRGAQGPNSGGNTPPGGSPVAPTNAPATARADETV) are disordered. A compositionally biased stretch (low complexity) spans 616–626 (RGAQGPNSGGN).

In the central section; belongs to the AAA ATPase family. This sequence in the C-terminal section; belongs to the peptidase M41 family. Homohexamer. Requires Zn(2+) as cofactor.

The protein resides in the cell inner membrane. Its function is as follows. Acts as a processive, ATP-dependent zinc metallopeptidase for both cytoplasmic and membrane proteins. Plays a role in the quality control of integral membrane proteins. The sequence is that of ATP-dependent zinc metalloprotease FtsH from Cupriavidus metallidurans (strain ATCC 43123 / DSM 2839 / NBRC 102507 / CH34) (Ralstonia metallidurans).